The primary structure comprises 155 residues: MYKIQLLSCIALTLALVANGAPTSSSTGNTMKEVKSLLLDLQLLLEKVKNPENLKLSRMHTFNFYVPKVNSTELKHLKCLLEELKLLEEVLNLAPSKNLNLREIKDSMDNIKRIVLELQGSETTFTCEYDNATVKAAEFLNKWITFCQSIYSTMT.

The N-terminal stretch at 1 to 20 (MYKIQLLSCIALTLALVANG) is a signal peptide. Residue threonine 23 is glycosylated (O-linked (GalNAc...) threonine). Cysteine 79 and cysteine 127 are disulfide-bonded.

It belongs to the IL-2 family.

The protein localises to the secreted. Functionally, cytokine produced by activated CD4-positive helper T-cells and to a lesser extend activated CD8-positive T-cells and natural killer (NK) cells that plays pivotal roles in the immune response and tolerance. Binds to a receptor complex composed of either the high-affinity trimeric IL-2R (IL2RA/CD25, IL2RB/CD122 and IL2RG/CD132) or the low-affinity dimeric IL-2R (IL2RB and IL2RG). Interaction with the receptor leads to oligomerization and conformation changes in the IL-2R subunits resulting in downstream signaling starting with phosphorylation of JAK1 and JAK3. In turn, JAK1 and JAK3 phosphorylate the receptor to form a docking site leading to the phosphorylation of several substrates including STAT5. This process leads to activation of several pathways including STAT, phosphoinositide-3-kinase/PI3K and mitogen-activated protein kinase/MAPK pathways. Functions as a T-cell growth factor and can increase NK-cell cytolytic activity as well. Promotes strong proliferation of activated B-cells and subsequently immunoglobulin production. Plays a pivotal role in regulating the adaptive immune system by controlling the survival and proliferation of regulatory T-cells, which are required for the maintenance of immune tolerance. Moreover, participates in the differentiation and homeostasis of effector T-cell subsets, including Th1, Th2, Th17 as well as memory CD8-positive T-cells. This Moschus berezovskii (Chinese forest musk deer) protein is Interleukin-2 (IL2).